The following is a 240-amino-acid chain: LexA repressor (240 aa).

The segment at residues 26-46 (FDEMKDALDLKSKSGIHRLIT) is a DNA-binding region (H-T-H motif). Active-site for autocatalytic cleavage activity residues include serine 161 and lysine 199.

It belongs to the peptidase S24 family. Homodimer.

The enzyme catalyses Hydrolysis of Ala-|-Gly bond in repressor LexA.. In terms of biological role, represses a number of genes involved in the response to DNA damage (SOS response), including recA and lexA. In the presence of single-stranded DNA, RecA interacts with LexA causing an autocatalytic cleavage which disrupts the DNA-binding part of LexA, leading to derepression of the SOS regulon and eventually DNA repair. The chain is LexA repressor from Methylobacterium nodulans (strain LMG 21967 / CNCM I-2342 / ORS 2060).